A 509-amino-acid polypeptide reads, in one-letter code: Probable cytochrome P450 4ac3 (509 aa).

Heme is bound at residue Cys454.

The protein belongs to the cytochrome P450 family. The cofactor is heme.

The protein localises to the endoplasmic reticulum membrane. It is found in the microsome membrane. In terms of biological role, may be involved in the metabolism of insect hormones and in the breakdown of synthetic insecticides. The protein is Probable cytochrome P450 4ac3 (Cyp4ac3) of Drosophila melanogaster (Fruit fly).